We begin with the raw amino-acid sequence, 207 residues long: MARCKS-related protein 1-B (207 aa).

Low complexity-rich tracts occupy residues 1 to 25 (MGSQ…AAVK) and 63 to 77 (AGAG…AAEG). Positions 1–207 (MGSQASKGGV…STPAPSEQKE (207 aa)) are disordered. Glycine 2 carries the N-myristoyl glycine lipid modification. The segment covering 78–90 (EAAKPEGEATKET) has biased composition (basic and acidic residues). The effector domain involved in lipid-binding stretch occupies residues 93-116 (KKKKKFSLKNSFKFKGISLKKSKK). Residues 100–109 (LKNSFKFKGI) show a composition bias toward low complexity. 2 stretches are compositionally biased toward basic and acidic residues: residues 131–154 (TEEK…KAEE) and 163–182 (PKAE…KEEA). Positions 195 to 207 (ETNSTPAPSEQKE) are enriched in polar residues.

Belongs to the MARCKS family. Strongly expressed in brain and eye. Also detected at lower levels in muscle.

It is found in the cytoplasm. The protein localises to the cytoskeleton. The protein resides in the cell membrane. Involved in the control of cell movement by regulating actin cytoskeleton homeostasis and filopodium and lamellipodium formation. This chain is MARCKS-related protein 1-B, found in Danio rerio (Zebrafish).